We begin with the raw amino-acid sequence, 86 residues long: YcgL domain-containing protein XAC4085 (86 aa).

The YcgL domain maps to 1–83 (MHAYVYKSQR…PKTIVLAGEC (83 aa)).

This chain is YcgL domain-containing protein XAC4085, found in Xanthomonas axonopodis pv. citri (strain 306).